The sequence spans 413 residues: S-adenosylmethionine synthase (413 aa).

His-15 is a binding site for ATP. Asp-17 serves as a coordination point for Mg(2+). Glu-43 is a binding site for K(+). Positions 56 and 100 each coordinate L-methionine. Positions 100 to 110 (QSPDISQGVNE) are flexible loop. ATP is bound by residues 171–173 (DGK), 248–249 (KF), Asp-257, 263–264 (RK), Ala-280, and Lys-284. Asp-257 contributes to the L-methionine binding site. Lys-288 contacts L-methionine.

It belongs to the AdoMet synthase family. In terms of assembly, homotetramer; dimer of dimers. It depends on Mg(2+) as a cofactor. Requires K(+) as cofactor.

It localises to the cytoplasm. The catalysed reaction is L-methionine + ATP + H2O = S-adenosyl-L-methionine + phosphate + diphosphate. It functions in the pathway amino-acid biosynthesis; S-adenosyl-L-methionine biosynthesis; S-adenosyl-L-methionine from L-methionine: step 1/1. Its function is as follows. Catalyzes the formation of S-adenosylmethionine (AdoMet) from methionine and ATP. The overall synthetic reaction is composed of two sequential steps, AdoMet formation and the subsequent tripolyphosphate hydrolysis which occurs prior to release of AdoMet from the enzyme. The sequence is that of S-adenosylmethionine synthase from Prochlorococcus marinus subsp. pastoris (strain CCMP1986 / NIES-2087 / MED4).